The chain runs to 778 residues: Aconitate hydratase, mitochondrial (778 aa).

The N-terminal 16 residues, 1-16 (MLSARSAIKRPIVRGL), are a transit peptide targeting the mitochondrion. Substrate is bound by residues glutamine 95 and 188–190 (DSH). Cysteine 382 is a [4Fe-4S] cluster binding site. The residue at position 391 (serine 391) is a Phosphoserine. The residue at position 409 (threonine 409) is a Phosphothreonine. Positions 445 and 448 each coordinate [4Fe-4S] cluster. The substrate site is built by arginine 471 and arginine 476. The residue at position 556 (serine 556) is a Phosphoserine. Substrate contacts are provided by residues arginine 604 and 667 to 668 (SR).

It belongs to the aconitase/IPM isomerase family. Monomer. Binds to mitochondrial DNA (mtDNA) and identified as component of mitochondrial nucleoids. [4Fe-4S] cluster serves as cofactor.

It is found in the mitochondrion. It localises to the cytoplasm. The catalysed reaction is citrate = D-threo-isocitrate. The protein operates within carbohydrate metabolism; tricarboxylic acid cycle; isocitrate from oxaloacetate: step 2/2. Subject to catabolite regulation. Functionally, catalyzes the isomerization of citrate to isocitrate via cis-aconitate, a step in the citric acid cycle. Can also provide minor contributions to the reversible dehydration of (R)-homocitrate to cis-homoaconitate, a step in the alpha-aminoadipate pathway for lysine biosynthesis. Also plays an essential role in mtDNA maintenance. May directly protect mtDNA from accumulation of point mutations and ssDNA breaks as a component of mitochondrial nucleoids, or by preventing accumulation of iron citrate thereby alleviating its detrimental effects in mitochondria. The sequence is that of Aconitate hydratase, mitochondrial from Saccharomyces cerevisiae (strain ATCC 204508 / S288c) (Baker's yeast).